We begin with the raw amino-acid sequence, 129 residues long: Intraflagellar transport protein 20 homolog (129 aa).

A coiled-coil region spans residues Val89 to Glu121.

As to quaternary structure, component of the IFT complex B composed of at least che-2, che-13, dyf-1, dyf-3, dyf-6, dyf-11, dyf-13, ift-20, ift-74, ift-81, ifta-2, osm-1, osm-5 and osm-6.

The protein resides in the cell projection. It is found in the cilium. Functionally, component of the intraflagellar transport (IFT) complex B required for transport of proteins in the motile cilium. Required for ciliary entrance and transport of specific ciliary cargo proteins such as che-3 which are related to motility. The sequence is that of Intraflagellar transport protein 20 homolog from Caenorhabditis elegans.